The chain runs to 262 residues: MGGEGGAEPVIHFVFVHGASHGAWCWYKLTTLLDAAGFKSTSVDLTGAGISLIDSNIVFDSDQYNRPLFSLLSDLPPHHKVILVGHSIGGGSVTEALCKFTDKISMAIYLAASMVQPGSIPSPHLSNIHVGEEDIWEYTYGEGTDKPPTGVLMKPEFIRHYYYSQSPLEDVTLSSKLLRPAPMRAFQDLDKLPPNPEAEKVPRVYIKTAKDNLFDSVRQDLLVENWPPSQLYVLEDSDHSAFFSVPTTLFAYLLRAVSFLQR.

Catalysis depends on Ser87, which acts as the Acyl-ester intermediate. Residues Asp211 and His239 each act as charge relay system in the active site.

The protein belongs to the AB hydrolase superfamily. Methylesterase family.

Its subcellular location is the cytoplasm. The catalysed reaction is methyl (indol-3-yl)acetate + H2O = (indol-3-yl)acetate + methanol + H(+). It catalyses the reaction methyl (-)-jasmonate + H2O = jasmonate + methanol + H(+). It carries out the reaction primary fluorescent dioxobilin-type chlorophyll catabolite + H2O = O13(4)-desmethyl pFDCC + methanol + H(+). Its pathway is plant hormone biosynthesis. It participates in lipid metabolism; oxylipin biosynthesis. The protein operates within porphyrin-containing compound metabolism; chlorophyll degradation. Functionally, involved in the chlorophyll breakdown by its action in fluorescent chlorophyll catabolites (FCCs) demethylation. Demethylates the C13(2)-carboxymethyl group present at the isocyclic ring of chlorophyll. Uses primary fluorescent dioxobilin-type chlorophyll catabolite (pFDCC) as substrate to produce O13(4)-desmethyl pFDCC. Also able to catalyze pheophorbides in vitro. Methylesterase shown to have carboxylesterase activity, methyl indole-3-acetic acid (MeIAA) esterase activity and methyl jasmonate (MeJA) esterase activity in vitro. The sequence is that of pFDCC methylesterase MES16 from Arabidopsis thaliana (Mouse-ear cress).